The chain runs to 171 residues: uncharacterized protein (171 aa).

This is an uncharacterized protein from Mycoplasma genitalium (strain ATCC 33530 / DSM 19775 / NCTC 10195 / G37) (Mycoplasmoides genitalium).